The chain runs to 346 residues: Histone PARylation factor 1 (346 aa).

Position 1 is an N-acetylmethionine (Met1). An N6-acetyllysine mark is found at Lys19, Lys186, and Lys233. The residue at position 235 (Asp235) is a PolyADP-ribosyl aspartic acid. Position 238 is an ADP-ribosyltyrosine (Tyr238). Glu240 carries the polyADP-ribosyl glutamic acid modification. An interaction with PARP1 region spans residues 242 to 346 (PETDADLKRI…SEENIDQLAG (105 aa)). The active-site Proton donor is Glu284.

The protein belongs to the HPF1 family. As to quaternary structure, interacts with PARP1 (via the PARP catalytic domain). Interacts with PARP2 (via the PARP catalytic domain). Interacts with core nucleosomes in a PARP1- and PARP2-dependent manner.

The protein localises to the chromosome. It localises to the nucleus. Its function is as follows. Cofactor for serine ADP-ribosylation that confers serine specificity on PARP1 and PARP2 and plays a key role in DNA damage response. Initiates the repair of double-strand DNA breaks: recruited to DNA damage sites by PARP1 and PARP2 and switches the amino acid specificity of PARP1 and PARP2 from aspartate or glutamate to serine residues, licensing serine ADP-ribosylation of target proteins. Serine ADP-ribosylation of target proteins, such as histones, promotes decompaction of chromatin and the recruitment of repair factors leading to the reparation of DNA strand breaks. Serine ADP-ribosylation of proteins constitutes the primary form of ADP-ribosylation of proteins in response to DNA damage. HPF1 acts by completing the active site of PARP1 and PARP2: forms a composite active site composed of residues from HPF1 and PARP1 or PARP2. While HPF1 promotes the initiation of serine ADP-ribosylation, it restricts the polymerase activity of PARP1 and PARP2 in order to limit the length of poly-ADP-ribose chains. HPF1 also promotes tyrosine ADP-ribosylation, probably by conferring tyrosine specificity on PARP1. The sequence is that of Histone PARylation factor 1 from Mus musculus (Mouse).